Reading from the N-terminus, the 156-residue chain is Small ribosomal subunit protein uS7 (156 aa).

This sequence belongs to the universal ribosomal protein uS7 family. As to quaternary structure, part of the 30S ribosomal subunit. Contacts proteins S9 and S11.

Functionally, one of the primary rRNA binding proteins, it binds directly to 16S rRNA where it nucleates assembly of the head domain of the 30S subunit. Is located at the subunit interface close to the decoding center, probably blocks exit of the E-site tRNA. The polypeptide is Small ribosomal subunit protein uS7 (Shewanella woodyi (strain ATCC 51908 / MS32)).